We begin with the raw amino-acid sequence, 138 residues long: uncharacterized protein (138 aa).

This is an uncharacterized protein from Archaeoglobus fulgidus (strain ATCC 49558 / DSM 4304 / JCM 9628 / NBRC 100126 / VC-16).